A 640-amino-acid chain; its full sequence is Serine/threonine-protein kinase ELM1 (640 aa).

Residues 27 to 47 form a disordered region; sequence ELDSPPITPTSQTSSFGSSFS. Residues 35–47 are compositionally biased toward low complexity; it reads PTSQTSSFGSSFS. One can recognise a Protein kinase domain in the interval 88–420; it reads YTLGVSAGSG…PIDSRNHSQI (333 aa). Residues 94 to 102 and lysine 117 contribute to the ATP site; that span reads AGSGQFGYV. Serine 152 bears the Phosphoserine mark. Residue aspartate 259 is the Proton acceptor of the active site. A phosphoserine mark is found at serine 516 and serine 519. Residues 520–529 show a composition bias toward polar residues; sequence LPNLTVNNDK. Disordered stretches follow at residues 520–547 and 562–587; these read LPNLTVNNDKQNSDMKTDRSESSSHSSL and SPKENGNRTHINCSQDKPSSPLMDRT. Positions 530–541 are enriched in basic and acidic residues; that stretch reads QNSDMKTDRSES. The span at 569–579 shows a compositional bias: polar residues; that stretch reads RTHINCSQDKP.

The protein belongs to the protein kinase superfamily. Ser/Thr protein kinase family. Mg(2+) is required as a cofactor.

It carries out the reaction L-seryl-[protein] + ATP = O-phospho-L-seryl-[protein] + ADP + H(+). The enzyme catalyses L-threonyl-[protein] + ATP = O-phospho-L-threonyl-[protein] + ADP + H(+). Important role in G1 events required for bud emergence and septin organization. Coordinates cell growth and cell division at G2/M, essential for efficient cytokinesis and for regulation of SWE1. This chain is Serine/threonine-protein kinase ELM1 (ELM1), found in Saccharomyces cerevisiae (strain ATCC 204508 / S288c) (Baker's yeast).